Here is a 173-residue protein sequence, read N- to C-terminus: Bifunctional protein PyrR (173 aa).

The short motif at 93 to 105 (VILVDDVLYTGRT) is the PRPP-binding element.

Belongs to the purine/pyrimidine phosphoribosyltransferase family. PyrR subfamily. Homodimer and homohexamer; in equilibrium.

It catalyses the reaction UMP + diphosphate = 5-phospho-alpha-D-ribose 1-diphosphate + uracil. In terms of biological role, regulates transcriptional attenuation of the pyrimidine nucleotide (pyr) operon by binding in a uridine-dependent manner to specific sites on pyr mRNA. This disrupts an antiterminator hairpin in the RNA and favors formation of a downstream transcription terminator, leading to a reduced expression of downstream genes. Functionally, also displays a weak uracil phosphoribosyltransferase activity which is not physiologically significant. The sequence is that of Bifunctional protein PyrR from Streptococcus thermophilus (strain CNRZ 1066).